The primary structure comprises 885 residues: MSDSPVELPSRLAVLPFRNKVLLPGAIVRIRCTNPSSVKLVEQELWQKEEKGLIGVLPVRDSEATAVGSLLSPGVGSDSGEGGSKVGGSAVESSKQDTKNGKEPIHWHSKGVAARALHLSRGVEKPSGRVTYIVVLEGLCRFSVQELSARGPYHVARVSRLDMTKTELEQAEQDPDLIALSRQFKATAMELISVLEQKQKTVGRTKVLLDTVPVYRLADIFVASFEISFEEQLSMLDSVHLKVRLSKATELVDRHLQSILVAEKITQKVEGQLSKSQKEFLLRQQMRAIKEELGDNDDDEDDVAALERKMQNAGMPANIWKHAQREMRRLRKMQPQQPGYSSSRAYLELLADLPWQKVSEERELDLRVAKESLDQDHYGLTKVKQRIIEYLAVRKLKPDARGPVLCFVGPPGVGKTSLASSIAKALNRKFIRISLGGVKDEADIRGHRRTYIGSMPGRLIDGLKRVSVSNPVMLLDEIDKTGSDVRGDPASALLEVLDPEQNKAFNDHYLNVPFDLSKVIFVATANRMQPIPPPLLDRMEIIELPGYTPEEKLKIAMKHLIPRVLEQHGLSTTNLQIPEAMVKLVIERYTREAGVRNLERNLAALARAAAVKVAEQVKTLRLGKEIQPITTTLLDSRLADGGEVEMEVIPMEHDISNTYENPSPMIVDEAMLEKVLGPPRFDDREAADRVASPGVSVGLVWTSVGGEVQFVEATAMVGKGDLHLTGQLGDVIKESAQLALTWVRARAADLNLSPTSDINLLESRDIHIHFPAGAVPKDGPSAGVTLVTALVSLFSNRKVRADTAMTGEMTLRGLVLPVGGVKDKVLAAHRYGIKRVILPERNLKDLSEVPLPILSDMEILLVKRIEEVLDHAFEGRCPLRSRSKL.

The region spanning L12–L256 is the Lon N-terminal domain. Residues L70–P104 form a disordered region. A compositionally biased stretch (gly residues) spans S77–V86. A compositionally biased stretch (basic and acidic residues) spans S94–P104. G409–T416 contributes to the ATP binding site. Positions V690–G875 constitute a Lon proteolytic domain. Residues S781 and K824 contribute to the active site. The Microbody targeting signal signature appears at S883–L885.

It belongs to the peptidase S16 family.

It localises to the peroxisome matrix. The catalysed reaction is Hydrolysis of proteins in presence of ATP.. Functionally, ATP-dependent serine protease that mediates the selective degradation of misfolded and unassembled polypeptides in the peroxisomal matrix. Necessary for type 2 peroxisome targeting signal (PTS2)-containing protein processing and facilitates peroxisome matrix protein import. The protein is Lon protease homolog 2, peroxisomal (LON1) of Zea mays (Maize).